A 310-amino-acid polypeptide reads, in one-letter code: Protoheme IX farnesyltransferase (310 aa).

The next 9 membrane-spanning stretches (helical) occupy residues 26-46 (VMSL…ATVH), 47-67 (PMIA…SGAL), 95-115 (GEAL…LGLA), 118-138 (LFAA…YSMW), 147-167 (IVIG…VATG), 174-194 (LFMF…LALF), 220-240 (VLAY…TGIG), 243-263 (LYLV…VRIW), and 281-301 (FFRF…AEAA).

It belongs to the UbiA prenyltransferase family. Protoheme IX farnesyltransferase subfamily. Interacts with CtaA.

The protein localises to the cell inner membrane. The catalysed reaction is heme b + (2E,6E)-farnesyl diphosphate + H2O = Fe(II)-heme o + diphosphate. It functions in the pathway porphyrin-containing compound metabolism; heme O biosynthesis; heme O from protoheme: step 1/1. Converts heme B (protoheme IX) to heme O by substitution of the vinyl group on carbon 2 of heme B porphyrin ring with a hydroxyethyl farnesyl side group. In Cereibacter sphaeroides (strain ATCC 17025 / ATH 2.4.3) (Rhodobacter sphaeroides), this protein is Protoheme IX farnesyltransferase.